We begin with the raw amino-acid sequence, 719 residues long: Nucleolar complex protein 2 homolog (719 aa).

Basic residues predominate over residues 1–24 (MKLLKKSSSLKKGVTKRAKLQKKP). Disordered regions lie at residues 1–67 (MKLL…GMKK), 86–136 (LQQE…TKIK), and 643–719 (ALEN…SDED). A compositionally biased stretch (basic and acidic residues) spans 25–42 (PSKDEASSSDEELAKLDG). The segment covering 89–130 (EDADLLNMEEDEDDDEEGEDNEDEEDEEEEEESDEDDDEEDD) has biased composition (acidic residues). Residues 643-661 (ALENSKKDDKKKKKEEEAA) are compositionally biased toward basic and acidic residues.

Belongs to the NOC2 family.

It is found in the nucleus. Functionally, required for normal somatic gonad development and for regulation of germline development and proliferation. The protein is Nucleolar complex protein 2 homolog (pro-2) of Caenorhabditis briggsae.